The chain runs to 249 residues: tRNA pseudouridine synthase A (249 aa).

The active-site Nucleophile is the D52. Y110 is a substrate binding site.

This sequence belongs to the tRNA pseudouridine synthase TruA family. In terms of assembly, homodimer.

The catalysed reaction is uridine(38/39/40) in tRNA = pseudouridine(38/39/40) in tRNA. Functionally, formation of pseudouridine at positions 38, 39 and 40 in the anticodon stem and loop of transfer RNAs. The chain is tRNA pseudouridine synthase A from Exiguobacterium sibiricum (strain DSM 17290 / CCUG 55495 / CIP 109462 / JCM 13490 / 255-15).